A 345-amino-acid chain; its full sequence is Inositol 2-dehydrogenase (345 aa).

Belongs to the Gfo/Idh/MocA family. As to quaternary structure, homotetramer.

It carries out the reaction myo-inositol + NAD(+) = scyllo-inosose + NADH + H(+). In terms of biological role, involved in the oxidation of myo-inositol (MI) to 2-keto-myo-inositol (2KMI or 2-inosose). The protein is Inositol 2-dehydrogenase of Mycolicibacterium smegmatis (strain ATCC 700084 / mc(2)155) (Mycobacterium smegmatis).